We begin with the raw amino-acid sequence, 1385 residues long: MKPVKHLLTTSNKSANVPALTTKKGLHNLPLSPELKEKHNAKLIHDKIEPMVLRSPPTGESILRYALPIPSSKTKNLLPEDEMIGKIIKHLKMVVSTLEETYGHCDQNGEEPFVKHEHEELSLSVGDDMNSFLTYCSQFAAQLEEALKEEQNILESLFKWFQWQVNQMEEISKDQTLLQAEPPKPDKTVILNIAEIVRLVQRFEELKNRLKQRSKSSVKVMLSKTMDKENRPEAVKSCEALAQKIEEFLEAHSTDEFKDVSATEPQTAHSMTNRFNAMLKVFENQANMLERAVNDQVLLDAEYKQMQCDFQLLSEEKLVLENELQKLKDKEKTKPTNNRTKKAVKTVKKKDKGKSEDSEKKMSPEKEFKIKEDLDQVQKVARLEIENKVLQEQLKQALQEAEKAKHQLNYFLNQEKLLKSEGKTETTMQVGNSQTKVKGEDSKNIPLEKETRKSLVSDSGGQRTSDKIQEYPQITAQSGRLIEKSSEKKRSSPAISDLSQILKSQDESAFLESSNEVSVAENQSYKSPSETHDKSLTTVSSSKEVQDSLSVGTLAQKNETVISPFILPPVLTESKKADVSEEQLQKMTEEQTYQAAEKSQADSEVPDENLMVENKDSVTKVQIEQMKQRTSSMERHEETLTTPQLPEDMVLVSRIQSETKNLKATRNESFHSHNDVPEENLMLEQDTKSKTEVEVKKQKSFQDNQLSTHNEVPNERLVVEHQESLSKTKLQIKKQETSTEQPLTTPDKEPNENLILRHQDSMSKSEMQVKEQRTLKGQRIITHDEEPGKNLVLEHQDSVSKLEMQIEKTKKLPREKRHSTHDEESGENPMLKHQDSVSKIQVQLEIQETSEGEGRSIPDKNSMFVHQDSVSKLQMQEKKKITPGRERRNTRIVVPNENVISVHQDSKSKLQMQEKKQINSGVERHKTFPLEIKKKDISLEHLLPEEKVLLSRSESQTKKLQAKVTSRKIKNEAASELPDTAENLPAMYPSISDLIIQFDLNKVVETDIESLRGALGRRLLNDEFKTQSKSFPGPDIEQLTDAFGRDILKDEFKTRSKSLPETDERLHSTTERGTINDAIKTQLKRKSYPETVLKHLKGVNGKDIIKHLINIQSKSHGETDKEHLADDTGRGIIKGSINAQLKGHQKTDKNFFAYATGRGLMKESTTTQLKSHPETDKEFLADAIGRGIIIGPITTQLKSHRETDKELLKDAIGRDIIKGPISAQLKSHQETDVEPLTNAIGSSKTIGEIKTQLRTHYDVNLFKNKDMSVQRQEGIFTRSITPSKFPTKVINLSPFENKEETYEYSSPYVTAPSKAIYRTYRAGPSFSKDIHLPLLNQLPSGHSKVVTLSQKTIEFTLPTVTNTVGKPTYKVLHAAARKSVPHPYF.

Residues 299–330 are a coiled coil; that stretch reads LDAEYKQMQCDFQLLSEEKLVLENELQKLKDK. The interval 329–364 is disordered; that stretch reads DKEKTKPTNNRTKKAVKTVKKKDKGKSEDSEKKMSP. Residues 339-352 show a composition bias toward basic residues; the sequence is RTKKAVKTVKKKDK. The segment covering 353–364 has biased composition (basic and acidic residues); it reads GKSEDSEKKMSP. Positions 374–411 form a coiled coil; that stretch reads LDQVQKVARLEIENKVLQEQLKQALQEAEKAKHQLNYF. Disordered stretches follow at residues 422–545, 572–752, and 809–834; these read GKTE…SKEV, TESK…EPNE, and TKKL…LKHQ. Positions 425–436 are enriched in polar residues; the sequence is ETTMQVGNSQTK. 2 stretches are compositionally biased toward basic and acidic residues: residues 437-455 and 481-490; these read VKGE…RKSL and LIEKSSEKKR. 3 stretches are compositionally biased toward polar residues: residues 493–503, 511–528, and 536–545; these read PAISDLSQILK, LESS…YKSP, and LTTVSSSKEV. Positions 573–589 are enriched in basic and acidic residues; sequence ESKKADVSEEQLQKMTE. Positions 654–664 are enriched in polar residues; that stretch reads RIQSETKNLKA. Basic and acidic residues-rich tracts occupy residues 665–676 and 685–697; these read TRNESFHSHNDV and QDTK…EVKK. Over residues 701–711 the composition is skewed to polar residues; the sequence is FQDNQLSTHNE. Over residues 712 to 726 the composition is skewed to basic and acidic residues; sequence VPNERLVVEHQESLS.

Expressed in epithelium of normal cervix and cervical cancer. Overexpressed in early and interim cervical cancer.

Functionally, may play a role in tumorigenesis. The polypeptide is Coiled-coil domain-containing protein 7 (CCDC7) (Homo sapiens (Human)).